The chain runs to 303 residues: ATP synthase gamma chain (303 aa).

Belongs to the ATPase gamma chain family. F-type ATPases have 2 components, CF(1) - the catalytic core - and CF(0) - the membrane proton channel. CF(1) has five subunits: alpha(3), beta(3), gamma(1), delta(1), epsilon(1). CF(0) has three main subunits: a, b and c.

The protein resides in the cell inner membrane. Its function is as follows. Produces ATP from ADP in the presence of a proton gradient across the membrane. The gamma chain is believed to be important in regulating ATPase activity and the flow of protons through the CF(0) complex. This Bartonella quintana (strain Toulouse) (Rochalimaea quintana) protein is ATP synthase gamma chain.